We begin with the raw amino-acid sequence, 174 residues long: Neuromedin-U (174 aa).

The N-terminal stretch at 1–37 is a signal peptide; that stretch reads MSRAAGHRPGLSAGQLAAATASPLLSLLLLLACCADA. The propeptide occupies 38–105; that stretch reads CKGVPISPQR…EQSEKDNTKR (68 aa). Methionine 141 bears the Methionine sulfoxide; partial mark. Asparagine 166 carries the asparagine amide modification. Positions 170 to 174 are excised as a propeptide; it reads STSFI.

The protein belongs to the NmU family.

The protein resides in the secreted. Ligand for receptors NMUR1 and NMUR2. Stimulates muscle contractions of specific regions of the gastrointestinal tract. Its function is as follows. Does not function as a ligand for either NMUR1 or NMUR2. Indirectly induces prolactin release although its potency is much lower than that of neuromedin precursor-related peptide 36. Functionally, does not function as a ligand for either NMUR1 or NMUR2. Indirectly induces prolactin release from lactotroph cells in the pituitary gland, probably via the hypothalamic dopaminergic system. In terms of biological role, stimulates muscle contractions of specific regions of the gastrointestinal tract. The sequence is that of Neuromedin-U (Nmu) from Mus musculus (Mouse).